Consider the following 229-residue polypeptide: PKHD-type hydroxylase Nham_1514 (229 aa).

The Fe2OG dioxygenase domain occupies 78 to 180; that stretch reads QIFPPLFNRY…RVASFFWLQS (103 aa). His98, Asp100, and His161 together coordinate Fe cation. Arg171 is a binding site for 2-oxoglutarate.

It depends on Fe(2+) as a cofactor. The cofactor is L-ascorbate.

This Nitrobacter hamburgensis (strain DSM 10229 / NCIMB 13809 / X14) protein is PKHD-type hydroxylase Nham_1514.